A 461-amino-acid chain; its full sequence is General transcription factor IIH subunit 2 (461 aa).

Polar residues predominate over residues 1-13 (MSKNIYNNNAQNK). Disordered regions lie at residues 1–37 (MSKN…DEDG) and 61–83 (LRPS…DRDG). Residues 61-71 (LRPSNQEERNT) show a composition bias toward basic and acidic residues. The VWFA domain occupies 98–275 (HLCLILDLSK…ESLMLKCQPP (178 aa)). The segment at 315–332 (CPRCGVKSCELPTDCQIC) adopts a C4-type zinc-finger fold. The segment covering 423-447 (TNGKTNGNEITNGNGNGNGNENENG) has biased composition (low complexity). The interval 423-461 (TNGKTNGNEITNGNGNGNGNENENGNGNGNGNGNGNGLH) is disordered. A 13 X 2 tandem repeat of N-[GE] region spans residues 434–459 (NGNGNGNGNENENGNGNGNGNGNGNG). Residues 448–461 (NGNGNGNGNGNGLH) show a composition bias toward gly residues.

It belongs to the GTF2H2 family. Component of the 7-subunit TFIIH core complex composed of XPB/repB, XPD/repD, gtf2h1, gtf2h2, gtf2h3, gtf2h4 and gtf2h5, which is active in NER. The core complex associates with the 3-subunit CDK-activating kinase (CAK) module composed of cycH/cyclin H, cdk7 and mnat1 to form the 10-subunit holoenzyme (holo-TFIIH) active in transcription.

It localises to the nucleus. In terms of biological role, component of the general transcription and DNA repair factor IIH (TFIIH) core complex, which is involved in general and transcription-coupled nucleotide excision repair (NER) of damaged DNA and, when complexed to CAK, in RNA transcription by RNA polymerase II. In NER, TFIIH acts by opening DNA around the lesion to allow the excision of the damaged oligonucleotide and its replacement by a new DNA fragment. In transcription, TFIIH has an essential role in transcription initiation. When the pre-initiation complex (PIC) has been established, TFIIH is required for promoter opening and promoter escape. Phosphorylation of the C-terminal tail (CTD) of the largest subunit of RNA polymerase II by the kinase module CAK controls the initiation of transcription. The chain is General transcription factor IIH subunit 2 (gtf2h2) from Dictyostelium discoideum (Social amoeba).